The following is a 365-amino-acid chain: Gibberellin 20 oxidase 1-B (365 aa).

The Fe2OG dioxygenase domain occupies 199-299; that stretch reads GNDSIMRLNY…RKSLAFFLCP (101 aa). 3 residues coordinate Fe cation: His224, Asp226, and His280. Arg290 is an active-site residue.

This sequence belongs to the iron/ascorbate-dependent oxidoreductase family. GA20OX subfamily. Requires Fe cation as cofactor. The cofactor is L-ascorbate. In terms of tissue distribution, not detected in nodes and the ear of the elongating stem.

The catalysed reaction is gibberellin A12 + 2 2-oxoglutarate + 3 O2 + H(+) = gibberellin A9 + 2 succinate + 3 CO2 + 2 H2O. The enzyme catalyses gibberellin A53 + 2 2-oxoglutarate + 3 O2 + H(+) = gibberellin A20 + 2 succinate + 3 CO2 + 2 H2O. Key oxidase enzyme in the biosynthesis of gibberellin that catalyzes the conversion of GA12 and GA53 to GA9 and GA20 respectively, via a three-step oxidation at C-20 of the GA skeleton. In Triticum aestivum (Wheat), this protein is Gibberellin 20 oxidase 1-B (GA20ox1B).